The chain runs to 193 residues: dTTP/UTP pyrophosphatase (193 aa).

Catalysis depends on aspartate 75, which acts as the Proton acceptor.

This sequence belongs to the Maf family. YhdE subfamily. A divalent metal cation serves as cofactor.

Its subcellular location is the cytoplasm. The catalysed reaction is dTTP + H2O = dTMP + diphosphate + H(+). The enzyme catalyses UTP + H2O = UMP + diphosphate + H(+). Nucleoside triphosphate pyrophosphatase that hydrolyzes dTTP and UTP. May have a dual role in cell division arrest and in preventing the incorporation of modified nucleotides into cellular nucleic acids. The polypeptide is dTTP/UTP pyrophosphatase (Chlorobium luteolum (strain DSM 273 / BCRC 81028 / 2530) (Pelodictyon luteolum)).